A 94-amino-acid chain; its full sequence is MKVQDKQHIRAWVSGKVQGVWYRNSTRQVAERLHVLGYAKNLPDGRVEVLAYGDTEAVNQLIDWLHDGPEAAIVTEVKTKQVEGETPPLGFEVC.

The region spanning 8-94 (HIRAWVSGKV…ETPPLGFEVC (87 aa)) is the Acylphosphatase-like domain. Residues R23 and N41 contribute to the active site.

Belongs to the acylphosphatase family.

It carries out the reaction an acyl phosphate + H2O = a carboxylate + phosphate + H(+). The sequence is that of Acylphosphatase (acyP) from Hahella chejuensis (strain KCTC 2396).